Consider the following 232-residue polypeptide: Nucleolar protein 16 (232 aa).

Residues 1 to 14 show a composition bias toward basic residues; sequence MGRELQKRKKRSSR. Disordered regions lie at residues 1–20 and 113–161; these read MGRE…VQTH and RSDN…QSSR. Residues 132–154 show a composition bias toward basic and acidic residues; sequence EEPKPKNPTHDIEWHGISDDRQE.

Belongs to the NOP16 family. As to quaternary structure, component of the pre-66S ribosomal particle.

The protein localises to the nucleus. It is found in the nucleolus. Involved in the biogenesis of the 60S ribosomal subunit. In Neurospora crassa (strain ATCC 24698 / 74-OR23-1A / CBS 708.71 / DSM 1257 / FGSC 987), this protein is Nucleolar protein 16 (nop-16).